Reading from the N-terminus, the 179-residue chain is MTYLSQLEALLFVAGEEGLSLRQLVSLLELTPTALQQQLDKLSQKYKEDKESGLCLIESSRTYKLVTKECLAPLLKDYAKAPINQTLSRASLEVLSIVAYKQPITRIEIDEIRGVNSSGALSKLVAFGLVQEAGKKEVIGRPNLYATTDYFLDYMGINHLEELVDISSIAVEEQETTLF.

Belongs to the ScpB family. In terms of assembly, homodimer. Homodimerization may be required to stabilize the binding of ScpA to the Smc head domains. Component of a cohesin-like complex composed of ScpA, ScpB and the Smc homodimer, in which ScpA and ScpB bind to the head domain of Smc. The presence of the three proteins is required for the association of the complex with DNA.

The protein resides in the cytoplasm. Participates in chromosomal partition during cell division. May act via the formation of a condensin-like complex containing Smc and ScpA that pull DNA away from mid-cell into both cell halves. This Streptococcus equi subsp. zooepidemicus (strain H70) protein is Segregation and condensation protein B.